We begin with the raw amino-acid sequence, 502 residues long: Maturase K (502 aa).

It belongs to the intron maturase 2 family. MatK subfamily.

It localises to the plastid. It is found in the chloroplast. Usually encoded in the trnK tRNA gene intron. Probably assists in splicing its own and other chloroplast group II introns. The sequence is that of Maturase K from Stanleya pinnata (Prince's plume).